The sequence spans 767 residues: Bifunctional lysine-specific demethylase and histidyl-hydroxylase NO66 (767 aa).

Positions threonine 21–serine 324 are disordered. The residue at position 44 (serine 44) is a Phosphoserine. Positions serine 46 to serine 71 are enriched in acidic residues. The segment covering glutamate 72–serine 81 has biased composition (low complexity). Residues phenylalanine 82 to serine 98 show a composition bias toward acidic residues. Polar residues-rich tracts occupy residues tyrosine 127–glutamate 137 and glutamate 177–proline 199. Serine 214 is modified (phosphoserine). The span at proline 262–valine 279 shows a compositional bias: polar residues. Basic and acidic residues predominate over residues glycine 315 to serine 324. Residues cysteine 420 to valine 565 enclose the JmjC domain. Histidine 466, aspartate 468, and histidine 531 together coordinate Fe cation.

This sequence belongs to the ROX family. NO66 subfamily. The cofactor is Fe(2+).

It is found in the nucleus. It carries out the reaction N(6),N(6)-dimethyl-L-lysyl(36)-[histone H3] + 2 2-oxoglutarate + 2 O2 = L-lysyl(36)-[histone H3] + 2 formaldehyde + 2 succinate + 2 CO2. Its function is as follows. Oxygenase that can act as both a histone lysine demethylase and a ribosomal histidine hydroxylase. Specifically demethylates 'Lys-4' (H3K4me) and 'Lys-36' (H3K36me) of histone H3, thereby playing a central role in histone code. This is Bifunctional lysine-specific demethylase and histidyl-hydroxylase NO66 from Drosophila willistoni (Fruit fly).